Consider the following 207-residue polypeptide: Dephospho-CoA kinase (207 aa).

Positions 10–207 (ILGLTGGIGS…FYLTLSGGQS (198 aa)) constitute a DPCK domain. An ATP-binding site is contributed by 18–23 (GSGKSA).

It belongs to the CoaE family.

The protein localises to the cytoplasm. The enzyme catalyses 3'-dephospho-CoA + ATP = ADP + CoA + H(+). It participates in cofactor biosynthesis; coenzyme A biosynthesis; CoA from (R)-pantothenate: step 5/5. Catalyzes the phosphorylation of the 3'-hydroxyl group of dephosphocoenzyme A to form coenzyme A. The chain is Dephospho-CoA kinase from Pseudomonas fluorescens (strain Pf0-1).